A 503-amino-acid chain; its full sequence is NAD(P)H-quinone oxidoreductase chain 4, chloroplastic (503 aa).

Helical transmembrane passes span 3–23 (FFPW…IVFF), 37–57 (LCIC…HFQV), 84–104 (GLSV…TLAA), 113–130 (LFHF…GLFA), 134–154 (LFLF…LLSM), 167–187 (FILY…GLTL), 208–228 (ALEI…SPIL), 242–262 (HYST…YGLI), 274–294 (SLFS…AALT), 305–325 (IAYS…SMTD), 330–350 (GALL…FLAG), 385–405 (SLAL…FGII), 416–436 (ILIS…SLSM), and 462–482 (LFLS…PDFV).

It belongs to the complex I subunit 4 family.

It is found in the plastid. It localises to the chloroplast thylakoid membrane. It catalyses the reaction a plastoquinone + NADH + (n+1) H(+)(in) = a plastoquinol + NAD(+) + n H(+)(out). The enzyme catalyses a plastoquinone + NADPH + (n+1) H(+)(in) = a plastoquinol + NADP(+) + n H(+)(out). In Ipomoea purpurea (Common morning glory), this protein is NAD(P)H-quinone oxidoreductase chain 4, chloroplastic.